The following is a 253-amino-acid chain: Ribonuclease HII (253 aa).

In terms of domain architecture, RNase H type-2 spans 32-223 (APVAGLDEAG…FKTSGEEDRI (192 aa)). A divalent metal cation contacts are provided by Asp-38, Glu-39, and Asp-130.

It belongs to the RNase HII family. Mn(2+) serves as cofactor. It depends on Mg(2+) as a cofactor.

It localises to the cytoplasm. It catalyses the reaction Endonucleolytic cleavage to 5'-phosphomonoester.. Its function is as follows. Endonuclease that specifically degrades the RNA of RNA-DNA hybrids. The polypeptide is Ribonuclease HII (Chelativorans sp. (strain BNC1)).